A 670-amino-acid polypeptide reads, in one-letter code: RxLR effector protein PSR2 (670 aa).

Positions 1 to 17 (MRLQCVVLFAALTLVAA) are cleaved as a signal peptide. The RxLR-dEER signature appears at 39–54 (RLLRPGNPAGKEDEER). A glycan (N-linked (GlcNAc...) asparagine) is linked at asparagine 57. The WY1 repeat unit spans residues 79-126 (KLLKWADAKKPPETVFTRLRLDKTGTQLFDNTDFPVWAAYTRSVAQTD). Residues 79-670 (KLLKWADAKK…YSAKFKVRWG (592 aa)) form a 7 X 93 AA tandem repeats region. The LWY2 repeat unit spans residues 127 to 217 (SEASAVMLKT…NYMKLSNKEN (91 aa)). One copy of the LWY3 repeat lies at 218–308 (PKAQTTLIAT…KYINYYNKEN (91 aa)). An LWY4 repeat occupies 309-399 (PDEKTTVLAK…KYTENFNLNK (91 aa)). One copy of the LWY5 repeat lies at 400 to 492 (EINEQVTAIQ…KFLEKYNTAN (93 aa)). The stretch at 493–583 (PGKEQTMISG…KYLNAFNDKA (91 aa)) is one LWY6 repeat. The LWY7 repeat unit spans residues 584–670 (PVKKALMIDT…YSAKFKVRWG (87 aa)).

Belongs to the RxLR effector family. Interacts with host dsRNA-binding protein DRB4.

It localises to the secreted. The protein localises to the host cell. In terms of biological role, secreted effector that possesses RNA silencing suppression activity by inhibiting the biogenesis of small RNAs in the host plant to promote enhanced susceptibility of host to the pathogen during infection. Interferes with secondary siRNA production by associating with host dsRNA-binding protein DRB4. Inhibits the host salicylic acid pathway during infection. This is RxLR effector protein PSR2 from Phytophthora sojae (Soybean stem and root rot agent).